A 405-amino-acid chain; its full sequence is MREKIVLAYSGGLDTSIIIPWLKENYSCDVIAMVGDVGQGDDIDAVVAKAHKTGASKVIVKDLREEFLTQYVYPAISTGAVYEHKYLLGTSLARPPIAKAQVEVALAEGATAVSHGCTGKGNDQVRFEHAFQALAPELKIIAPWREWTLKSREDCLDYAEAHGISVAQSREKIHSRDRNLLHVSHEGGELEDPNNAPLDTTWTWTKSPQEAPDRVEEVTIGFEGGVPVSINGMKLEPLALIELLNEIGARNAIGRIDLVENRFVGIKSRGCYETPGGSLLLAAHRELEALCLDRDTLHYKQEVALKWAELVYFGLWFTPLRESLDAFVASTQKNIAGAVKLALYKGNIAVAGRTSPKSLYRPDIASFTMGAGYDQKDAEGFIRILGLPARSRALIENAGKEKVSK.

8–16 (AYSGGLDTS) is a binding site for ATP. Residues tyrosine 86 and serine 91 each coordinate L-citrulline. Residue glycine 116 coordinates ATP. L-aspartate is bound by residues threonine 118, asparagine 122, and aspartate 123. L-citrulline is bound at residue asparagine 122. L-citrulline is bound by residues arginine 126, serine 175, serine 184, glutamate 260, and tyrosine 272.

The protein belongs to the argininosuccinate synthase family. Type 1 subfamily. As to quaternary structure, homotetramer.

The protein resides in the cytoplasm. It catalyses the reaction L-citrulline + L-aspartate + ATP = 2-(N(omega)-L-arginino)succinate + AMP + diphosphate + H(+). Its pathway is amino-acid biosynthesis; L-arginine biosynthesis; L-arginine from L-ornithine and carbamoyl phosphate: step 2/3. In Koribacter versatilis (strain Ellin345), this protein is Argininosuccinate synthase.